Consider the following 151-residue polypeptide: UPF0178 protein YaiI (151 aa).

It belongs to the UPF0178 family.

The polypeptide is UPF0178 protein YaiI (Salmonella choleraesuis (strain SC-B67)).